We begin with the raw amino-acid sequence, 302 residues long: Nucleotide-binding protein SE_0548 (302 aa).

Residue 18 to 25 (GMSGAGKS) coordinates ATP. 69–72 (DLRG) provides a ligand contact to GTP.

This sequence belongs to the RapZ-like family.

Functionally, displays ATPase and GTPase activities. This chain is Nucleotide-binding protein SE_0548, found in Staphylococcus epidermidis (strain ATCC 12228 / FDA PCI 1200).